A 140-amino-acid polypeptide reads, in one-letter code: Holo-[acyl-carrier-protein] synthase (140 aa).

Mg(2+) is bound by residues Asp-9 and Glu-63.

The protein belongs to the P-Pant transferase superfamily. AcpS family. It depends on Mg(2+) as a cofactor.

It is found in the cytoplasm. It catalyses the reaction apo-[ACP] + CoA = holo-[ACP] + adenosine 3',5'-bisphosphate + H(+). In terms of biological role, transfers the 4'-phosphopantetheine moiety from coenzyme A to a Ser of acyl-carrier-protein. In Paraburkholderia phytofirmans (strain DSM 17436 / LMG 22146 / PsJN) (Burkholderia phytofirmans), this protein is Holo-[acyl-carrier-protein] synthase.